A 203-amino-acid chain; its full sequence is MDKLNIRDILRAQDVTRWQIVRTKKQSVAEHTFAVQAVLMRLVPLLISTYTAPMKVGFEERLLCECIMGAFWHDIPEVITGDIASPVKRLIRDGGDITPLDDLEKKVDPAFIKCYTAAKPLTLAIIKCADLMEMVYHLNEYGDQRANSHSWRVQHGINNAFHEHIHNCSENFPAFKWDVAHGLLIEMLDPSQETDIDSIVNGI.

R17 provides a ligand contact to dATP. Co(2+)-binding residues include H31, H73, D74, E77, D82, and D130.

Belongs to the Caudovirales dATP triphosphohydrolase family. Co(2+) is required as a cofactor.

The enzyme catalyses dATP + H2O = 2'-deoxyadenosine + triphosphate + H(+). The catalysed reaction is dADP + H2O = 2'-deoxyadenosine + diphosphate. It catalyses the reaction dAMP + H2O = 2'-deoxyadenosine + phosphate. Catalyzes the hydrolysis of dATP, dADP and dAMP into dA. This step is essential for Z-genome synthesis (containing aminoadenine instead of adenine). Specifically removes dATP and its precursor dADP from the nucleotide pool of the host, preventing the incorporation of A into the phage genome and favoring the integration of the Z-base into the viral genome. This is dATP triphosphohydrolase (datZ) from Acinetobacter phage SH-Ab 15497.